A 435-amino-acid chain; its full sequence is Serine hydroxymethyltransferase (435 aa).

(6S)-5,6,7,8-tetrahydrofolate-binding positions include L131 and 135–137; that span reads GHL. An N6-(pyridoxal phosphate)lysine modification is found at K240.

It belongs to the SHMT family. As to quaternary structure, homodimer. Pyridoxal 5'-phosphate serves as cofactor.

It localises to the cytoplasm. The enzyme catalyses (6R)-5,10-methylene-5,6,7,8-tetrahydrofolate + glycine + H2O = (6S)-5,6,7,8-tetrahydrofolate + L-serine. It participates in one-carbon metabolism; tetrahydrofolate interconversion. The protein operates within amino-acid biosynthesis; glycine biosynthesis; glycine from L-serine: step 1/1. In terms of biological role, catalyzes the reversible interconversion of serine and glycine with tetrahydrofolate (THF) serving as the one-carbon carrier. This reaction serves as the major source of one-carbon groups required for the biosynthesis of purines, thymidylate, methionine, and other important biomolecules. Also exhibits THF-independent aldolase activity toward beta-hydroxyamino acids, producing glycine and aldehydes, via a retro-aldol mechanism. This Bifidobacterium longum subsp. infantis (strain ATCC 15697 / DSM 20088 / JCM 1222 / NCTC 11817 / S12) protein is Serine hydroxymethyltransferase.